Here is a 109-residue protein sequence, read N- to C-terminus: FK506-binding protein (109 aa).

In terms of domain architecture, PPIase FKBP-type spans 20–108 (GKEITVHYTG…IFEVELLKVY (89 aa)).

This sequence belongs to the FKBP-type PPIase family.

It carries out the reaction [protein]-peptidylproline (omega=180) = [protein]-peptidylproline (omega=0). Its function is as follows. PPIases accelerate the folding of proteins. The sequence is that of FK506-binding protein (fbp) from Neisseria meningitidis serogroup C.